The following is a 157-amino-acid chain: Protein-export protein SecB (157 aa).

The protein belongs to the SecB family. As to quaternary structure, homotetramer, a dimer of dimers. One homotetramer interacts with 1 SecA dimer.

Its subcellular location is the cytoplasm. Functionally, one of the proteins required for the normal export of preproteins out of the cell cytoplasm. It is a molecular chaperone that binds to a subset of precursor proteins, maintaining them in a translocation-competent state. It also specifically binds to its receptor SecA. This is Protein-export protein SecB from Proteus mirabilis (strain HI4320).